The chain runs to 114 residues: uncharacterized protein (114 aa).

Disordered regions lie at residues glycine 26–glycine 45 and proline 72–alanine 98.

This is an uncharacterized protein from Homo sapiens (Human).